The primary structure comprises 338 residues: Nicotinate-nucleotide--dimethylbenzimidazole phosphoribosyltransferase (338 aa).

E305 acts as the Proton acceptor in catalysis.

This sequence belongs to the CobT family.

The catalysed reaction is 5,6-dimethylbenzimidazole + nicotinate beta-D-ribonucleotide = alpha-ribazole 5'-phosphate + nicotinate + H(+). Its pathway is nucleoside biosynthesis; alpha-ribazole biosynthesis; alpha-ribazole from 5,6-dimethylbenzimidazole: step 1/2. Functionally, catalyzes the synthesis of alpha-ribazole-5'-phosphate from nicotinate mononucleotide (NAMN) and 5,6-dimethylbenzimidazole (DMB). The sequence is that of Nicotinate-nucleotide--dimethylbenzimidazole phosphoribosyltransferase from Rhizobium etli (strain ATCC 51251 / DSM 11541 / JCM 21823 / NBRC 15573 / CFN 42).